The chain runs to 336 residues: Inositol 2-dehydrogenase (336 aa).

The protein belongs to the Gfo/Idh/MocA family. As to quaternary structure, homotetramer.

It catalyses the reaction myo-inositol + NAD(+) = scyllo-inosose + NADH + H(+). Functionally, involved in the oxidation of myo-inositol (MI) to 2-keto-myo-inositol (2KMI or 2-inosose). The chain is Inositol 2-dehydrogenase from Salmonella agona (strain SL483).